A 324-amino-acid chain; its full sequence is Phospho-N-acetylmuramoyl-pentapeptide-transferase (324 aa).

The next 10 helical transmembrane spans lie at 5-25 (AIVIAMAVSFLITVVLSPLFI), 57-77 (IMILLAIVATTLWITPKIAGL), 81-101 (TYLLLLVTVGYGVLGFLDDMI), 117-137 (FIGQLLIAAIFFAVYRQSGFS), 147-167 (WSVDLGWAYGVLLLFMLVGGS), 176-196 (LDGLLAGTAAIAFGAYAVLAW), 203-223 (VAVFCVAVVGAVLGFLVFNAH), 227-247 (VFMGDTGSLALGGAIAAVAVL), 250-270 (LELLLVIIGGVFVIETLSVII), and 302-322 (IVVTFWAVGLLFAMLGIYIEV).

Belongs to the glycosyltransferase 4 family. MraY subfamily. Requires Mg(2+) as cofactor.

Its subcellular location is the cell membrane. The catalysed reaction is UDP-N-acetyl-alpha-D-muramoyl-L-alanyl-gamma-D-glutamyl-meso-2,6-diaminopimeloyl-D-alanyl-D-alanine + di-trans,octa-cis-undecaprenyl phosphate = di-trans,octa-cis-undecaprenyl diphospho-N-acetyl-alpha-D-muramoyl-L-alanyl-D-glutamyl-meso-2,6-diaminopimeloyl-D-alanyl-D-alanine + UMP. It functions in the pathway cell wall biogenesis; peptidoglycan biosynthesis. Functionally, catalyzes the initial step of the lipid cycle reactions in the biosynthesis of the cell wall peptidoglycan: transfers peptidoglycan precursor phospho-MurNAc-pentapeptide from UDP-MurNAc-pentapeptide onto the lipid carrier undecaprenyl phosphate, yielding undecaprenyl-pyrophosphoryl-MurNAc-pentapeptide, known as lipid I. The polypeptide is Phospho-N-acetylmuramoyl-pentapeptide-transferase (Geobacillus kaustophilus (strain HTA426)).